Here is a 341-residue protein sequence, read N- to C-terminus: Glycerol-3-phosphate dehydrogenase [NAD(P)+] (341 aa).

Residues Ser14, Phe15, Arg35, and Lys108 each coordinate NADPH. Sn-glycerol 3-phosphate is bound by residues Lys108 and Gly136. Ala140 provides a ligand contact to NADPH. Sn-glycerol 3-phosphate-binding residues include Lys191, Asp244, Ser254, Arg255, and Asn256. Catalysis depends on Lys191, which acts as the Proton acceptor. Arg255 provides a ligand contact to NADPH. NADPH-binding residues include Val279 and Glu281.

The protein belongs to the NAD-dependent glycerol-3-phosphate dehydrogenase family.

The protein localises to the cytoplasm. The enzyme catalyses sn-glycerol 3-phosphate + NAD(+) = dihydroxyacetone phosphate + NADH + H(+). It carries out the reaction sn-glycerol 3-phosphate + NADP(+) = dihydroxyacetone phosphate + NADPH + H(+). It participates in membrane lipid metabolism; glycerophospholipid metabolism. Functionally, catalyzes the reduction of the glycolytic intermediate dihydroxyacetone phosphate (DHAP) to sn-glycerol 3-phosphate (G3P), the key precursor for phospholipid synthesis. The protein is Glycerol-3-phosphate dehydrogenase [NAD(P)+] of Pseudomonas syringae pv. syringae (strain B728a).